We begin with the raw amino-acid sequence, 312 residues long: DNA-directed RNA polymerase subunit alpha (312 aa).

Residues 1–226 are alpha N-terminal domain (alpha-NTD); it reads MIEFEKPKIT…DHLNLFVDLS (226 aa). Positions 243–312 are alpha C-terminal domain (alpha-CTD); the sequence is TERVLDKIIE…ELGLSLKKRK (70 aa).

It belongs to the RNA polymerase alpha chain family. In terms of assembly, homodimer. The RNAP catalytic core consists of 2 alpha, 1 beta, 1 beta' and 1 omega subunit. When a sigma factor is associated with the core the holoenzyme is formed, which can initiate transcription.

The catalysed reaction is RNA(n) + a ribonucleoside 5'-triphosphate = RNA(n+1) + diphosphate. Its function is as follows. DNA-dependent RNA polymerase catalyzes the transcription of DNA into RNA using the four ribonucleoside triphosphates as substrates. The sequence is that of DNA-directed RNA polymerase subunit alpha from Lactococcus lactis subsp. lactis (strain IL1403) (Streptococcus lactis).